The chain runs to 634 residues: Extracellular metalloproteinase mep (634 aa).

An N-terminal signal peptide occupies residues 1-18 (MRGLLLAGALALPASVFA). Positions 19-245 (HPAHQSYGLN…IHGVVDYVAE (227 aa)) are excised as a propeptide. N286 carries an N-linked (GlcNAc...) asparagine glycan. Zn(2+) is bound at residue H429. Residue E430 is part of the active site. H433 provides a ligand contact to Zn(2+).

Belongs to the peptidase M36 family. Zn(2+) is required as a cofactor.

The protein resides in the secreted. Its function is as follows. Secreted metalloproteinase that allows assimilation of proteinaceous substrates and probably acts as a virulence factor. This is Extracellular metalloproteinase mep (mep) from Aspergillus fumigatus (strain CBS 144.89 / FGSC A1163 / CEA10) (Neosartorya fumigata).